The sequence spans 336 residues: tRNA N6-adenosine threonylcarbamoyltransferase (336 aa).

His-115, His-119, and Tyr-136 together coordinate Fe cation. Residues 136–140 (YVAGG), Asp-168, Glu-185, and Ser-266 contribute to the substrate site. Residue Asp-294 participates in Fe cation binding.

The protein belongs to the KAE1 / TsaD family. The cofactor is Fe(2+).

It localises to the cytoplasm. The catalysed reaction is L-threonylcarbamoyladenylate + adenosine(37) in tRNA = N(6)-L-threonylcarbamoyladenosine(37) in tRNA + AMP + H(+). Required for the formation of a threonylcarbamoyl group on adenosine at position 37 (t(6)A37) in tRNAs that read codons beginning with adenine. Is probably involved in the transfer of the threonylcarbamoyl moiety of threonylcarbamoyl-AMP (TC-AMP) to the N6 group of A37. The chain is tRNA N6-adenosine threonylcarbamoyltransferase from Thermofilum pendens (strain DSM 2475 / Hrk 5).